The following is a 339-amino-acid chain: MDGLHTELALGLIGCCGGDGQQQTAPFVAKTYQMVCDPRTDALVRWGRDNNSFVVVDPAAFSQLLLPCFFKHGNFSSFVRQLNTYGFRKVHPDRWEFAHESFLRGQTHLLPRIVRRKKRGEGGGGGGGASCSFGGGAGEHQVAAAAASVGMSGEEEDAAEDVLAKEAALFEEVQRLRHEQTAIGEELARMSQRLQATERRPDQLMSFLAKLADDPNAVTGHLLEQAAERKRRRQHLPSHEPTVCPLPPAPPPQPPQPLLALAGAAAMDGTYWWTTEHHHHHHHQMKPMTVLPSLEPPTASCGVHQVPELGGGGVMGLTTDGEAKVEPPFPFCLLGQAFF.

The stretch at 154–217 forms a coiled coil; sequence EEEDAAEDVL…LAKLADDPNA (64 aa). The tract at residues 176–212 is hydrophobic repeat HR-A/B; sequence LRHEQTAIGEELARMSQRLQATERRPDQLMSFLAKLA. The interval 227–248 is disordered; sequence AERKRRRQHLPSHEPTVCPLPP. The Nuclear localization signal motif lies at 229–233; sequence RKRRR.

This sequence belongs to the HSF family. Class C subfamily. As to quaternary structure, homotrimer. Post-translationally, exhibits temperature-dependent phosphorylation.

It is found in the nucleus. Transcriptional regulator that specifically binds DNA of heat shock promoter elements (HSE). This is Heat stress transcription factor C-1a (HSFC1A) from Oryza sativa subsp. japonica (Rice).